A 147-amino-acid polypeptide reads, in one-letter code: uncharacterized protein (147 aa).

It to M.jannaschii MJ1086 N-terminal region.

This is an uncharacterized protein from Methanocaldococcus jannaschii (strain ATCC 43067 / DSM 2661 / JAL-1 / JCM 10045 / NBRC 100440) (Methanococcus jannaschii).